We begin with the raw amino-acid sequence, 439 residues long: MDDCVHKTVGSAARTERTALAVRAVLEGRRRGASMLLPFAGPAVVVSVAYMDPGNLATNIQAGARYGYALLWVVLLANVVAMLFQSLSAKLGIVTGRNLAELCRERFSRPVALAMWVVSEIAAMATDLAAFLGGAIGLSLLFRMPLLGGMVVTAIVTYGLLLLEDAGFRPLELAIGALVGIIGLSYLAELFITPIAWSSVLAHTVSPRFPDANALLIAVGIVGATVMPHALFLHSGLTQRRTPARTERERAVLLKFSNIEVVVALAIAGLINMAMVIMAAGAFHHGHPEVAEIETAYHTLAPLLGIGAAGVFLLSLIASGISSSVVGTMAGQIIMQGFVEFRIPLWLRRAVTMAPSFAVVALGVNVTQALVLSQVVLSLALPLPMAALLWFTCSREVMGAYKNRVFIAVIATLAACAVLAFNAVLILQTFGVDIPGLPG.

11 consecutive transmembrane segments (helical) span residues 32 to 52, 67 to 87, 121 to 141, 144 to 164, 173 to 193, 214 to 234, 261 to 281, 301 to 321, 350 to 370, 371 to 391, and 406 to 426; these read GASM…AYMD, GYAL…FQSL, IAAM…LSLL, MPLL…LLLE, LAIG…LFIT, ALLI…LFLH, VVVA…MAAG, APLL…ASGI, AVTM…TQAL, VLSQ…LLWF, and FIAV…AVLI.

Belongs to the NRAMP family.

It localises to the cell inner membrane. In terms of biological role, h(+)-stimulated, divalent metal cation uptake system. This Verminephrobacter eiseniae (strain EF01-2) protein is Divalent metal cation transporter MntH.